Reading from the N-terminus, the 813-residue chain is Cadherin-22 (813 aa).

Positions 1-33 are cleaved as a signal peptide; the sequence is MRPRPEGALRAGAALSPVLLFLLLLPLLGHLWA. Over 34-621 the chain is Extracellular; the sequence is ASTPAPSSLS…AFVMAASLSP (588 aa). Cadherin domains follow at residues 61–165, 166–274, 275–391, 392–495, and 496–613; these read WVWN…EPRF, LHGP…PPRF, PQKM…PPEF, RPPS…NPPE, and LATP…TTAF. N159 carries N-linked (GlcNAc...) asparagine glycosylation. N-linked (GlcNAc...) asparagine glycans are attached at residues N463 and N609. The chain crosses the membrane as a helical span at residues 622-642; the sequence is GALIALLVCVLILVVLALLIL. The Cytoplasmic segment spans residues 643-813; the sequence is TLRRHHKSHL…HRGDDEAPAS (171 aa). A disordered region spans residues 696–726; the sequence is GGDPGGGAASPPQAASSSERHSLPRGPSSPE.

As to expression, predominantly expressed in brain. Abundant in olfactory bulb, cerebrum, and cerebellum, less in pons, medulla, and spinal cord. Low expression in heart. No expression in lung, liver, spleen, kidney, testis, stomach, intestine, colon, and placenta.

The protein localises to the cell membrane. Cadherins are calcium-dependent cell adhesion proteins. They preferentially interact with themselves in a homophilic manner in connecting cells; cadherins may thus contribute to the sorting of heterogeneous cell types. PB-cadherins may have a role in the morphological organization of pituitary gland and brain tissues. The protein is Cadherin-22 (Cdh22) of Mus musculus (Mouse).